Here is a 271-residue protein sequence, read N- to C-terminus: Pyrroline-5-carboxylate reductase (271 aa).

The protein belongs to the pyrroline-5-carboxylate reductase family.

It localises to the cytoplasm. It catalyses the reaction L-proline + NADP(+) = (S)-1-pyrroline-5-carboxylate + NADPH + 2 H(+). The enzyme catalyses L-proline + NAD(+) = (S)-1-pyrroline-5-carboxylate + NADH + 2 H(+). It functions in the pathway amino-acid biosynthesis; L-proline biosynthesis; L-proline from L-glutamate 5-semialdehyde: step 1/1. In terms of biological role, catalyzes the reduction of 1-pyrroline-5-carboxylate (PCA) to L-proline. The polypeptide is Pyrroline-5-carboxylate reductase (Staphylococcus aureus (strain COL)).